We begin with the raw amino-acid sequence, 402 residues long: Acyl-[acyl-carrier-protein] desaturase 3, chloroplastic (402 aa).

Disordered stretches follow at residues 1–25 and 38–66; these read MSLT…GGAS and VGGI…THTL. A chloroplast-targeting transit peptide spans 1–32; it reads MSLTGCLPPRPPCSMRRRTSGGGASVSPVVVM. 6 residues coordinate Fe cation: glutamate 139, glutamate 178, histidine 181, glutamate 231, glutamate 264, and histidine 267.

It belongs to the fatty acid desaturase type 2 family. Homodimer. The cofactor is Fe(2+).

It is found in the plastid. It localises to the chloroplast. The protein operates within lipid metabolism; fatty acid metabolism. In terms of biological role, introduces a cis double bond in the acyl chain of an acyl-[acyl-carrier protein]. The chain is Acyl-[acyl-carrier-protein] desaturase 3, chloroplastic from Oryza sativa subsp. indica (Rice).